The following is a 192-amino-acid chain: Erythropoietin (192 aa).

The first 26 residues, 1-26 (MGVPDCLALPLLVTFLLLSLGLPVLG), serve as a signal peptide directing secretion. The cysteines at positions 33 and 187 are disulfide-linked. 3 N-linked (GlcNAc...) asparagine glycosylation sites follow: Asn-50, Asn-64, and Asn-109.

Belongs to the EPO/TPO family.

It localises to the secreted. Its function is as follows. Hormone involved in the regulation of erythrocyte proliferation and differentiation and the maintenance of a physiological level of circulating erythrocyte mass. Binds to EPOR leading to EPOR dimerization and JAK2 activation thereby activating specific downstream effectors, including STAT1 and STAT3. The chain is Erythropoietin (EPO) from Nannospalax galili (Northern Israeli blind subterranean mole rat).